Here is a 670-residue protein sequence, read N- to C-terminus: Methionine--tRNA ligase (670 aa).

The short motif at 14-24 is the 'HIGH' region element; the sequence is PYANGHLHLGH. Residues cysteine 145, cysteine 148, cysteine 158, and cysteine 161 each coordinate Zn(2+). The 'KMSKS' region motif lies at 330 to 334; the sequence is KMSKS. Lysine 333 contacts ATP. The tRNA-binding domain occupies 570–670; the sequence is DFAKVDLRIA…AGAFPGMKVK (101 aa).

The protein belongs to the class-I aminoacyl-tRNA synthetase family. MetG type 1 subfamily. In terms of assembly, homodimer. The cofactor is Zn(2+).

It is found in the cytoplasm. It catalyses the reaction tRNA(Met) + L-methionine + ATP = L-methionyl-tRNA(Met) + AMP + diphosphate. In terms of biological role, is required not only for elongation of protein synthesis but also for the initiation of all mRNA translation through initiator tRNA(fMet) aminoacylation. The protein is Methionine--tRNA ligase of Legionella pneumophila (strain Corby).